Consider the following 697-residue polypeptide: Elongation factor G (697 aa).

Positions 8–282 constitute a tr-type G domain; that stretch reads EDYRNIGIMA…AIVDYLPSPL (275 aa). GTP-binding positions include 17-24, 81-85, and 135-138; these read AHIDAGKT, DTPGH, and NKMD.

This sequence belongs to the TRAFAC class translation factor GTPase superfamily. Classic translation factor GTPase family. EF-G/EF-2 subfamily.

The protein resides in the cytoplasm. In terms of biological role, catalyzes the GTP-dependent ribosomal translocation step during translation elongation. During this step, the ribosome changes from the pre-translocational (PRE) to the post-translocational (POST) state as the newly formed A-site-bound peptidyl-tRNA and P-site-bound deacylated tRNA move to the P and E sites, respectively. Catalyzes the coordinated movement of the two tRNA molecules, the mRNA and conformational changes in the ribosome. This chain is Elongation factor G, found in Metamycoplasma arthritidis (strain 158L3-1) (Mycoplasma arthritidis).